The chain runs to 52 residues: Ornatin-C (52 aa).

Positions 42-44 match the Cell attachment site motif; sequence RGD.

Belongs to the ornatin family.

It localises to the secreted. Functionally, potent inhibitor of fibrinogen interaction with platelet receptors expressed on glycoprotein IIb-IIIa complex. May prevent blood from clotting during either feeding and/or storage of ingested blood. The protein is Ornatin-C of Placobdella ornata (Turtle leech).